The chain runs to 320 residues: Ribosomal RNA small subunit methyltransferase H (320 aa).

Residues Gly-42 to His-44, Asp-62, Phe-86, Asp-108, and Gln-115 each bind S-adenosyl-L-methionine.

Belongs to the methyltransferase superfamily. RsmH family.

It localises to the cytoplasm. It catalyses the reaction cytidine(1402) in 16S rRNA + S-adenosyl-L-methionine = N(4)-methylcytidine(1402) in 16S rRNA + S-adenosyl-L-homocysteine + H(+). In terms of biological role, specifically methylates the N4 position of cytidine in position 1402 (C1402) of 16S rRNA. The polypeptide is Ribosomal RNA small subunit methyltransferase H (Yersinia pseudotuberculosis serotype O:1b (strain IP 31758)).